The chain runs to 263 residues: Receptor expression-enhancing protein 3-A (263 aa).

2 consecutive transmembrane segments (helical) span residues Val2–Phe22 and Tyr35–Ala55. Disordered regions lie at residues Gly161–Ser228 and Tyr240–Leu263. Positions Asp199–Val214 are enriched in acidic residues. Residues Ser242 to Pro251 are compositionally biased toward basic residues.

Belongs to the DP1 family.

It localises to the endoplasmic reticulum membrane. Functionally, microtubule-binding protein required to ensure proper cell division and nuclear envelope reassembly by sequestering the endoplasmic reticulum away from chromosomes during mitosis. Probably acts by clearing the endoplasmic reticulum membrane from metaphase chromosomes. The polypeptide is Receptor expression-enhancing protein 3-A (reep3-a) (Xenopus laevis (African clawed frog)).